The chain runs to 143 residues: uncharacterized protein (143 aa).

The N-terminal stretch at 1 to 27 (MSDEIARLVADVFELAGLLRRSGEVVA) is a signal peptide.

This is an uncharacterized protein from Mycobacterium tuberculosis (strain CDC 1551 / Oshkosh).